We begin with the raw amino-acid sequence, 670 residues long: Lebercilin-like protein (670 aa).

A disordered region spans residues 30-51 (KRSPGTGDFSRNSNASNKSVDY). Over residues 38-51 (FSRNSNASNKSVDY) the composition is skewed to polar residues. Coiled coils occupy residues 148–259 (LHKI…EREE) and 305–336 (AAQT…IKNI). Residues 374 to 393 (HQGTQKSDVPPLTTKGKKAT) form a disordered region. Positions 420 to 440 (EDSKRKYEDLSGEEKHLEVQI) form a coiled coil. Disordered stretches follow at residues 495 to 516 (RSMQ…YTKG), 557 to 580 (KHLS…SFGK), and 609 to 670 (LKTD…KIII). 2 stretches are compositionally biased toward basic and acidic residues: residues 560 to 572 (SNRE…HSDS) and 621 to 632 (GSEEPLQSKESH). Residues 651-662 (TVVNSIKPSSPT) show a composition bias toward polar residues.

The protein belongs to the LCA5 family.

In Homo sapiens (Human), this protein is Lebercilin-like protein (LCA5L).